The following is a 355-amino-acid chain: UDP-galactose translocator 1 (355 aa).

The tract at residues 1–36 (MKFQNVHISHQDEDKEKLLPNDKDVEKADESPSSSR) is disordered. Basic and acidic residues predominate over residues 9 to 30 (SHQDEDKEKLLPNDKDVEKADE). 6 helical membrane passes run 40 to 60 (VFKC…TLTI), 177 to 197 (WMAI…NVSA), 211 to 231 (IVGL…GVYF), 282 to 302 (VWAV…VMRY), 309 to 329 (SMAS…IFPD), and 330 to 350 (IFIG…VLLY).

This sequence belongs to the nucleotide-sugar transporter family. SLC35A subfamily.

The protein resides in the membrane. The protein localises to the cytoplasmic granule membrane. The chain is UDP-galactose translocator 1 (ugtp-1) from Caenorhabditis elegans.